A 79-amino-acid chain; its full sequence is Pyridoxal 5'-phosphate synthase PDX1-like 4 (79 aa).

The protein belongs to the PdxS/SNZ family.

The sequence is that of Pyridoxal 5'-phosphate synthase PDX1-like 4 (PDX1L4) from Arabidopsis thaliana (Mouse-ear cress).